The primary structure comprises 103 residues: Cell division protein FtsB (103 aa).

Topologically, residues 1–3 (MGK) are cytoplasmic. The helical transmembrane segment at 4 to 21 (LTLLLLAILVWLQYSLWF) threads the bilayer. The Periplasmic portion of the chain corresponds to 22–103 (GKNGIHDYTR…RAQSAGQNNR (82 aa)). The stretch at 31-71 (RVNDDVAAQQATNAKLKARNDQLFAEIDDLNGGQEALEERA) forms a coiled coil.

This sequence belongs to the FtsB family. Part of a complex composed of FtsB, FtsL and FtsQ.

It is found in the cell inner membrane. Essential cell division protein. May link together the upstream cell division proteins, which are predominantly cytoplasmic, with the downstream cell division proteins, which are predominantly periplasmic. The sequence is that of Cell division protein FtsB from Shigella boydii serotype 18 (strain CDC 3083-94 / BS512).